We begin with the raw amino-acid sequence, 396 residues long: Phosphoglycerate kinase (396 aa).

Substrate is bound by residues 21-23 (DLN), R36, 59-62 (HFGR), R118, and R151. Residues K201, E323, and 353-356 (GGDT) each bind ATP.

Belongs to the phosphoglycerate kinase family. As to quaternary structure, monomer.

It localises to the cytoplasm. The catalysed reaction is (2R)-3-phosphoglycerate + ATP = (2R)-3-phospho-glyceroyl phosphate + ADP. It participates in carbohydrate degradation; glycolysis; pyruvate from D-glyceraldehyde 3-phosphate: step 2/5. In Brucella melitensis biotype 1 (strain ATCC 23456 / CCUG 17765 / NCTC 10094 / 16M), this protein is Phosphoglycerate kinase.